The sequence spans 105 residues: MGRIENDNQDVSDDGSIIRVKLPNKRIREQFAQAELMLGSNHIRVRCSDGVTRLGRIKGKIKKRVWIREGDILIVVPWDFQDDKCDIIYRYTTPQVDWLRAHKYL.

The region spanning 18–92 (IRVKLPNKRI…DKCDIIYRYT (75 aa)) is the S1-like domain.

This sequence belongs to the eIF-1A family.

In terms of biological role, seems to be required for maximal rate of protein biosynthesis. Enhances ribosome dissociation into subunits and stabilizes the binding of the initiator Met-tRNA(I) to 40 S ribosomal subunits. This is Translation initiation factor 1A (eIF1A) from Methanocorpusculum labreanum (strain ATCC 43576 / DSM 4855 / Z).